The sequence spans 218 residues: Small ribosomal subunit protein uS3c (218 aa).

The 72-residue stretch at 47 to 118 (VQKHMRISSG…RLNIAIARVP (72 aa)) folds into the KH type-2 domain.

Belongs to the universal ribosomal protein uS3 family. As to quaternary structure, part of the 30S ribosomal subunit.

It is found in the plastid. Its subcellular location is the chloroplast. The chain is Small ribosomal subunit protein uS3c (rps3) from Nuphar advena (Common spatterdock).